The following is a 20-amino-acid chain: Putative beta-neurotoxin (20 aa).

The LCN-type CS-alpha/beta domain maps to 1-20 (KDGYLVGSDGCKYSCLTRPG).

Expressed by the venom gland.

It is found in the secreted. In terms of biological role, beta toxins bind voltage-independently at site-4 of sodium channels (Nav) and shift the voltage of activation toward more negative potentials thereby affecting sodium channel activation and promoting spontaneous and repetitive firing. The chain is Putative beta-neurotoxin from Tityus pachyurus (Colombian scorpion).